Consider the following 143-residue polypeptide: Myosin 1 light chain cam2 (143 aa).

3 consecutive EF-hand domains span residues 6–41 (EQTD…LGIN), 75–110 (ESEE…LGEK), and 111–143 (LSDN…IMAK).

Belongs to the calmodulin family. Interacts with myo1 and pik1.

Its subcellular location is the cytoplasm. It is found in the prospore membrane. In terms of biological role, plays a role in meiosis and sporulation. The polypeptide is Myosin 1 light chain cam2 (Schizosaccharomyces pombe (strain 972 / ATCC 24843) (Fission yeast)).